Consider the following 252-residue polypeptide: Imidazole glycerol phosphate synthase subunit HisF (252 aa).

Residues D11 and D130 contribute to the active site.

The protein belongs to the HisA/HisF family. Heterodimer of HisH and HisF.

The protein localises to the cytoplasm. It catalyses the reaction 5-[(5-phospho-1-deoxy-D-ribulos-1-ylimino)methylamino]-1-(5-phospho-beta-D-ribosyl)imidazole-4-carboxamide + L-glutamine = D-erythro-1-(imidazol-4-yl)glycerol 3-phosphate + 5-amino-1-(5-phospho-beta-D-ribosyl)imidazole-4-carboxamide + L-glutamate + H(+). It functions in the pathway amino-acid biosynthesis; L-histidine biosynthesis; L-histidine from 5-phospho-alpha-D-ribose 1-diphosphate: step 5/9. IGPS catalyzes the conversion of PRFAR and glutamine to IGP, AICAR and glutamate. The HisF subunit catalyzes the cyclization activity that produces IGP and AICAR from PRFAR using the ammonia provided by the HisH subunit. This chain is Imidazole glycerol phosphate synthase subunit HisF, found in Bacillus licheniformis (strain ATCC 14580 / DSM 13 / JCM 2505 / CCUG 7422 / NBRC 12200 / NCIMB 9375 / NCTC 10341 / NRRL NRS-1264 / Gibson 46).